The primary structure comprises 160 residues: Cytochrome c-type biogenesis protein CcmE (160 aa).

At 1–7 (MTRKQRR) the chain is on the cytoplasmic side. The chain crosses the membrane as a helical; Signal-anchor for type II membrane protein span at residues 8–28 (LFMIFGALGTLGVAVGLILFA). The Periplasmic portion of the chain corresponds to 29 to 160 (LSDNIVFFYG…TQGAAAPLIR (132 aa)). Residues His122 and Tyr126 each coordinate heme. The interval 140–160 (VWQEDGQAKPATQGAAAPLIR) is disordered.

The protein belongs to the CcmE/CycJ family.

It is found in the cell inner membrane. Its function is as follows. Heme chaperone required for the biogenesis of c-type cytochromes. Transiently binds heme delivered by CcmC and transfers the heme to apo-cytochromes in a process facilitated by CcmF and CcmH. The polypeptide is Cytochrome c-type biogenesis protein CcmE (Beijerinckia indica subsp. indica (strain ATCC 9039 / DSM 1715 / NCIMB 8712)).